A 527-amino-acid chain; its full sequence is MTARAEYLDHEDFLYRSHKLQELSELGVVLYPYEFPGVFSCEDIKKTFASQELGNSEAAMSRSTPRVRFAGRLVLFRAMGKNAFGQILDHNQTIQVMFNREFTSVHGLSEDAEITPIKFIEKKLDLGDILGIDGYLFFTHSGELTVLVETVTLLCKSLLSLPDKHAGLSDKEVRYRKRWLDLISSREVSDTFVKRSYIIKLIRNYMDAHGFLEVETPILQNIYGGAEAKPFTTTMEALHSEMFLRISLEIALKKILVGGAPRIYELGKVFRNEGIDRTHNPEFTMIEAYAAYMDYKEVMVFVENLVEHLVRAVNHDNTSLVYSYWKHGPQEVDFKAPWIRMTMKESIATYAGIDVDVHSDQKLKEILKKKTTFPETAFATASRGMLIAALFDELVSDNLIAPHHITDHPVETTPLCKTLRSGDTAFVERFESFCLGKELCNAYSELNDPIRQRELLEQQHTKKELLPDSECHPIDEEFLEALCQGMPPAGGFGIGVDRLVMILTNAASIRDVLYFPVMRRFDAEKTN.

Mg(2+) is bound by residues Glu431 and Glu438.

Belongs to the class-II aminoacyl-tRNA synthetase family. Homodimer. Requires Mg(2+) as cofactor.

The protein localises to the cytoplasm. The catalysed reaction is tRNA(Lys) + L-lysine + ATP = L-lysyl-tRNA(Lys) + AMP + diphosphate. The polypeptide is Lysine--tRNA ligase (lysS) (Chlamydia pneumoniae (Chlamydophila pneumoniae)).